The sequence spans 101 residues: Urease subunit beta (101 aa).

The protein belongs to the urease beta subunit family. Heterotrimer of UreA (gamma), UreB (beta) and UreC (alpha) subunits. Three heterotrimers associate to form the active enzyme.

Its subcellular location is the cytoplasm. It catalyses the reaction urea + 2 H2O + H(+) = hydrogencarbonate + 2 NH4(+). Its pathway is nitrogen metabolism; urea degradation; CO(2) and NH(3) from urea (urease route): step 1/1. The polypeptide is Urease subunit beta (Bradyrhizobium sp. (strain ORS 278)).